A 417-amino-acid polypeptide reads, in one-letter code: RH-like protein IA (417 aa).

The next 11 helical transmembrane spans lie at 12–32 (CLPL…YFFT), 44–64 (LVAS…GFGF), 77–97 (VAFS…LDGF), 125–145 (ISVD…MVLV), 172–192 (IYVF…KPLP), 203–223 (TIPS…WPSF), 238–258 (VFNT…GSSL), 265–285 (ISMS…GTSC), 287–307 (LITS…ISIG), 331–351 (NFSL…VHHT), and 358–378 (MIGF…TIAL).

Belongs to the ammonium transporter (TC 2.A.49) family. Rh subfamily.

Its subcellular location is the membrane. In terms of biological role, may be part of an oligomeric complex which is likely to have a transport or channel function in the erythrocyte membrane. This is RH-like protein IA from Pan troglodytes (Chimpanzee).